We begin with the raw amino-acid sequence, 58 residues long: Rho-conotoxin TIA (58 aa).

The N-terminal stretch at 1–16 (MFTVFLLVVLATTGVS) is a signal peptide. Residues 17–38 (FTLDRASDGGNAVAKKSDVTAR) constitute a propeptide that is removed on maturation. The interaction with ADRA1B stretch occupies residues 40 to 42 (NWR). Cystine bridges form between cysteine 43–cysteine 49 and cysteine 44–cysteine 57. A lacks the Ser-Xaa-Pro motif that is crucial for potent interaction with nAChR region spans residues 45–47 (LIP). Cysteine 57 bears the Cysteine amide mark.

This sequence belongs to the conotoxin A superfamily. In terms of tissue distribution, expressed by the venom duct.

Its subcellular location is the secreted. In terms of biological role, allosteric inhibitor of alpha-1B adrenergic receptors (ADRA1B). Binds to an allosteric modulatory site on transmembrane helix 6 and 7 at the base of extracellular loop 3 of ADRA1B. Also weakly inhibits alpha-1A (ADRA1A) and alpha-1D (ADRA1D) adrenergic receptors in a competitive manner. Potently inhibits contractions of vas deferens, spleen and aorta in response to noradrenaline. May also inhibits nicotinic acetylcholine receptors with a possible distinct nAChR binding mode from other alpha-conotoxins, due to a different three residue motif (lacks the Ser-Xaa-Pro motif). The polypeptide is Rho-conotoxin TIA (Conus tulipa (Fish-hunting cone snail)).